The primary structure comprises 210 residues: Small ribosomal subunit protein uS3 (210 aa).

The KH type-2 domain occupies 38 to 106 (IRQFLKKRLY…EVFININEVR (69 aa)).

The protein belongs to the universal ribosomal protein uS3 family. As to quaternary structure, part of the 30S ribosomal subunit. Forms a tight complex with proteins S10 and S14.

Its function is as follows. Binds the lower part of the 30S subunit head. Binds mRNA in the 70S ribosome, positioning it for translation. The protein is Small ribosomal subunit protein uS3 of Trichlorobacter lovleyi (strain ATCC BAA-1151 / DSM 17278 / SZ) (Geobacter lovleyi).